We begin with the raw amino-acid sequence, 292 residues long: Elongation factor Ts (292 aa).

The segment at 79 to 82 is involved in Mg(2+) ion dislocation from EF-Tu; that stretch reads TDFV.

This sequence belongs to the EF-Ts family.

It localises to the cytoplasm. Associates with the EF-Tu.GDP complex and induces the exchange of GDP to GTP. It remains bound to the aminoacyl-tRNA.EF-Tu.GTP complex up to the GTP hydrolysis stage on the ribosome. In Xanthomonas oryzae pv. oryzae (strain MAFF 311018), this protein is Elongation factor Ts.